We begin with the raw amino-acid sequence, 307 residues long: MSSDAKQQETNFAINFLMGGVSAAIAKTAASPIERVKILIQNQDEMIKQGTLDKKYSGIVDCFKRTAKQEGLISFWRGNTANVIRYFPTQALNFAFKDKIKLMFGFKKEEGYGKWFAGNLASGGAAGALSLLFVYSLDFARTRLAADAKSSKKGGARQFNGLTDVYKKTLKSDGIAGLYRGFMPSVVGIVVYRGLYFGMFDSLKPLVLTGSLDGSFLASFLLGWVVTTGASTCSYPLDTVRRRMMMTSGQAVKYNGAIDCLKKIVASEGVGSLFKGCGANILRSVAGAGVISMYDQLQMILFGKKFK.

Solcar repeat units lie at residues 10-103 (TNFA…IKLM), 114-206 (KWFA…LKPL), and 214-300 (GSFL…LQMI). 5 helical membrane passes run 12–39 (FAIN…VKIL), 80–104 (TANV…KLMF), 112–132 (YGKW…LSLL), 182–203 (FMPS…FDSL), and 217–237 (LASF…SYPL). Positions 85 and 97 each coordinate ADP. Residue R241 coordinates ADP. Residues 241–246 (RRRMMM) form an important for transport activity region. A Nucleotide carrier signature motif motif is present at residues 241–246 (RRRMMM). Residues 277–297 (CGANILRSVAGAGVISMYDQL) traverse the membrane as a helical segment.

The protein belongs to the mitochondrial carrier (TC 2.A.29) family. As to quaternary structure, monomer.

The protein localises to the mitochondrion inner membrane. It catalyses the reaction ADP(in) + ATP(out) = ADP(out) + ATP(in). Its activity is regulated as follows. The matrix-open state (m-state) is inhibited by the membrane-permeable bongkrekic acid (BKA). The cytoplasmic-open state (c-state) is inhibited by the membrane-impermeable toxic inhibitor carboxyatractyloside (CATR). In terms of biological role, ADP:ATP antiporter that mediates import of ADP into the mitochondrial matrix for ATP synthesis, and export of ATP out to fuel the cell. Cycles between the cytoplasmic-open state (c-state) and the matrix-open state (m-state): operates by the alternating access mechanism with a single substrate-binding site intermittently exposed to either the cytosolic (c-state) or matrix (m-state) side of the inner mitochondrial membrane. This Saccharomyces cerevisiae (strain ATCC 204508 / S288c) (Baker's yeast) protein is ADP,ATP carrier protein 3 (AAC3).